Consider the following 97-residue polypeptide: Small ribosomal subunit protein bS20 (97 aa).

The protein belongs to the bacterial ribosomal protein bS20 family.

Functionally, binds directly to 16S ribosomal RNA. The polypeptide is Small ribosomal subunit protein bS20 (Prochlorococcus marinus (strain MIT 9215)).